Reading from the N-terminus, the 668-residue chain is Methionine--tRNA ligase (668 aa).

Positions 11-21 (AYTNGPLHIGH) match the 'HIGH' region motif. Cys146, Cys149, Cys159, and Cys162 together coordinate Zn(2+). The 'KMSKS' region signature appears at 332–336 (KMSTS). Residue Thr335 participates in ATP binding. One can recognise a tRNA-binding domain in the interval 567–668 (EFNRLDLRVG…REVEPGERIR (102 aa)).

This sequence belongs to the class-I aminoacyl-tRNA synthetase family. MetG type 1 subfamily. In terms of assembly, homodimer. The cofactor is Zn(2+).

The protein resides in the cytoplasm. The enzyme catalyses tRNA(Met) + L-methionine + ATP = L-methionyl-tRNA(Met) + AMP + diphosphate. Its function is as follows. Is required not only for elongation of protein synthesis but also for the initiation of all mRNA translation through initiator tRNA(fMet) aminoacylation. This is Methionine--tRNA ligase from Methanopyrus kandleri (strain AV19 / DSM 6324 / JCM 9639 / NBRC 100938).